The sequence spans 310 residues: Transcription factor LRL2 (310 aa).

2 stretches are compositionally biased toward low complexity: residues 1–20 (MNSSSLLTPSSSPSPHLQSP) and 104–126 (QTQTQSQATASATTGGATAQPQT). Disordered stretches follow at residues 1–23 (MNSSSLLTPSSSPSPHLQSPATF) and 95–143 (FHLP…PHSI). Residues 136-149 (QATDPHSIAERLRR) form a basic motif; degenerate region. Residues 136 to 185 (QATDPHSIAERLRRERIAERMKSLQELVPNGNKTDKASMLDEIIDYVKFL) form the bHLH domain. Residues 150–185 (ERIAERMKSLQELVPNGNKTDKASMLDEIIDYVKFL) form a helix-loop-helix motif region. The tract at residues 203–225 (ASSQISEDAGGSHENTSSSGEAK) is disordered.

In terms of assembly, homodimer. As to expression, expressed constitutively in roots, leaves, stems, and flowers.

It localises to the nucleus. Functionally, transcription factor that regulates the development of root hairs. Transcription factor that regulates the development of sperm cells. This Arabidopsis thaliana (Mouse-ear cress) protein is Transcription factor LRL2.